The primary structure comprises 145 residues: Deoxyuridine 5'-triphosphate nucleotidohydrolase (145 aa).

Residues 64-66, Asn-77, 81-83, and Met-91 each bind substrate; these read RSG and TID.

Belongs to the dUTPase family. Mg(2+) is required as a cofactor.

The enzyme catalyses dUTP + H2O = dUMP + diphosphate + H(+). It participates in pyrimidine metabolism; dUMP biosynthesis; dUMP from dCTP (dUTP route): step 2/2. Functionally, this enzyme is involved in nucleotide metabolism: it produces dUMP, the immediate precursor of thymidine nucleotides and it decreases the intracellular concentration of dUTP so that uracil cannot be incorporated into DNA. The chain is Deoxyuridine 5'-triphosphate nucleotidohydrolase from Leptospira borgpetersenii serovar Hardjo-bovis (strain JB197).